A 242-amino-acid polypeptide reads, in one-letter code: Ubiquinone biosynthesis O-methyltransferase (242 aa).

Residues Arg-44, Gly-64, Asp-85, and Met-129 each coordinate S-adenosyl-L-methionine.

The protein belongs to the methyltransferase superfamily. UbiG/COQ3 family.

It catalyses the reaction a 3-demethylubiquinol + S-adenosyl-L-methionine = a ubiquinol + S-adenosyl-L-homocysteine + H(+). The enzyme catalyses a 3-(all-trans-polyprenyl)benzene-1,2-diol + S-adenosyl-L-methionine = a 2-methoxy-6-(all-trans-polyprenyl)phenol + S-adenosyl-L-homocysteine + H(+). The protein operates within cofactor biosynthesis; ubiquinone biosynthesis. Its function is as follows. O-methyltransferase that catalyzes the 2 O-methylation steps in the ubiquinone biosynthetic pathway. The chain is Ubiquinone biosynthesis O-methyltransferase from Salmonella paratyphi A (strain ATCC 9150 / SARB42).